The following is a 243-amino-acid chain: Sugar fermentation stimulation protein homolog (243 aa).

It belongs to the SfsA family.

The sequence is that of Sugar fermentation stimulation protein homolog from Lacticaseibacillus casei (strain BL23) (Lactobacillus casei).